The primary structure comprises 158 residues: S-ribosylhomocysteine lyase (158 aa).

The Fe cation site is built by His54, His58, and Cys124.

This sequence belongs to the LuxS family. As to quaternary structure, homodimer. Fe cation is required as a cofactor.

It catalyses the reaction S-(5-deoxy-D-ribos-5-yl)-L-homocysteine = (S)-4,5-dihydroxypentane-2,3-dione + L-homocysteine. Its function is as follows. Involved in the synthesis of autoinducer 2 (AI-2) which is secreted by bacteria and is used to communicate both the cell density and the metabolic potential of the environment. The regulation of gene expression in response to changes in cell density is called quorum sensing. Catalyzes the transformation of S-ribosylhomocysteine (RHC) to homocysteine (HC) and 4,5-dihydroxy-2,3-pentadione (DPD). This is S-ribosylhomocysteine lyase from Lactobacillus johnsonii (strain CNCM I-12250 / La1 / NCC 533).